The chain runs to 210 residues: Synaptosomal-associated protein 25 (210 aa).

The disordered stretch occupies residues 1–23 (MENSVENSMDPRSEQEEMQRCAD). Over residues 9–20 (MDPRSEQEEMQR) the composition is skewed to basic and acidic residues. T-SNARE coiled-coil homology domains follow at residues 23–85 (DQIT…LSDL) and 147–209 (DARE…ATKM).

The protein belongs to the SNAP-25 family.

The protein localises to the synapse. It localises to the synaptosome. Its subcellular location is the cell membrane. Its function is as follows. May play an important role in the synaptic function of specific neuronal systems. Associates with proteins involved in vesicle docking and membrane fusion. The protein is Synaptosomal-associated protein 25 (snap25) of Torpedo marmorata (Marbled electric ray).